The primary structure comprises 306 residues: Homoserine O-acetyltransferase (306 aa).

The Acyl-thioester intermediate role is filled by Cys142. Substrate-binding residues include Lys163 and Ser192. The active-site Proton acceptor is His235. Glu237 is a catalytic residue. Arg249 is a binding site for substrate.

The protein belongs to the MetA family.

It is found in the cytoplasm. It catalyses the reaction L-homoserine + acetyl-CoA = O-acetyl-L-homoserine + CoA. It participates in amino-acid biosynthesis; L-methionine biosynthesis via de novo pathway; O-acetyl-L-homoserine from L-homoserine: step 1/1. Transfers an acetyl group from acetyl-CoA to L-homoserine, forming acetyl-L-homoserine. The chain is Homoserine O-acetyltransferase from Brevibacillus brevis (strain 47 / JCM 6285 / NBRC 100599).